The primary structure comprises 71 residues: Palustrin-2AJ2 (71 aa).

An N-terminal signal peptide occupies residues 1 to 22; the sequence is MFTLKKPLLVLLFLGTVSLSLC. A propeptide spanning residues 23-40 is cleaved from the precursor; the sequence is EQERAADDDEGEVIEEEV. C65 and C71 form a disulfide bridge.

Expressed by the skin glands.

The protein resides in the secreted. Its function is as follows. Displays broad-spectrum antibacterial activity against a range of Gram-positive and Gram-negative bacteria. Has low hemolytic activity, low cytotoxicity and low antioxidant activity. The protein is Palustrin-2AJ2 of Amolops jingdongensis (Chinese torrent frog).